The sequence spans 660 residues: Protein NEDD1 (660 aa).

8 WD repeats span residues 1–31 (MQENLRFASSGDDIKIWDASSMTLVDKFNPH), 32–71 (TSPHGISSICWSSNNNFLVTASSSGDKIVVSSCKCKPVPL), 75–114 (AEGQKQTCVNLNSTSMYLVSGGLNNTVNIWDLKSKRVHRS), 117–156 (DHKDQVTCVTYNWNDCYIASGSLSGEIILHSVTTNLSSTP), 160–200 (GSNQ…PYHN), 204–244 (VHKA…LVKT), 246–285 (VADTPLTAVDFMPDGATLAIGSSRGKIYQYDLRMLKSPVK), and 289–332 (AHKT…NAAS). Serine 325 carries the phosphoserine modification. Residues 369–411 (QEKAGLPRSINTDTLSKETDSGKNQDFSSFDDTGKSSLGDMFS) form a disordered region. At threonine 382 the chain carries Phosphothreonine; by PLK1. Serine 397 bears the Phosphoserine; by PLK1 mark. Phosphoserine is present on serine 411. A Phosphoserine; by PLK1 modification is found at serine 426. 2 positions are modified to phosphoserine: serine 468 and serine 516. Polar residues predominate over residues 507–523 (GAESGNLNTSPSSNQTR). Residues 507-532 (GAESGNLNTSPSSNQTRNSEKFEKPE) are disordered. Threonine 550 carries the phosphothreonine; by CDK1 modification. Serine 637 is subject to Phosphoserine; by PLK1.

In terms of assembly, interacts with FAM29A. Interacts with HSPA1A and HSPA1B. Interacts with gamma-tubulin in a HSPA1A/B-dependent manner. Post-translationally, during mitosis, prior phosphorylation on Thr-550 by CDK1 promotes subsequent phosphorylation by PLK1 on Thr-382, Ser-397, Ser-426 and Ser-637. Phosphorylated NEDD1 can interact with gamma-tubulin for targeting the gamma-tubulin ring complex (gTuRC) to the centrosome, an important step for spindle formation.

The protein resides in the cytoplasm. Its subcellular location is the cytoskeleton. It is found in the microtubule organizing center. It localises to the centrosome. Its function is as follows. Required for mitosis progression. Promotes the nucleation of microtubules from the spindle. The sequence is that of Protein NEDD1 (NEDD1) from Homo sapiens (Human).